The following is a 334-amino-acid chain: Nucleoid-associated protein VS_0951 (334 aa).

The protein belongs to the YejK family.

It is found in the cytoplasm. It localises to the nucleoid. The sequence is that of Nucleoid-associated protein VS_0951 from Vibrio atlanticus (strain LGP32) (Vibrio splendidus (strain Mel32)).